The sequence spans 126 residues: Ribulose bisphosphate carboxylase small subunit, chloroplastic 1 (126 aa).

The protein belongs to the RuBisCO small chain family. Heterohexadecamer of 8 large and 8 small subunits.

The protein localises to the plastid. The protein resides in the chloroplast. Its function is as follows. RuBisCO catalyzes two reactions: the carboxylation of D-ribulose 1,5-bisphosphate, the primary event in carbon dioxide fixation, as well as the oxidative fragmentation of the pentose substrate. Both reactions occur simultaneously and in competition at the same active site. Although the small subunit is not catalytic it is essential for maximal activity. This chain is Ribulose bisphosphate carboxylase small subunit, chloroplastic 1, found in Acetabularia peniculus (Green alga).